The chain runs to 276 residues: Transmembrane protein 45B (276 aa).

6 helical membrane passes run 7–27 (HALPGSFFLIVGLWWSLKYPL), 48–68 (IIEAAIRTLFAVIGILVEQFV), 95–115 (LFFAVSGIMDMLTYLITHVPL), 147–167 (IHSLLLYTVFGGALSLAVEVV), 181–201 (LLLLQGTWFWQIGFVLFPPFG), and 213–233 (IMFVTMCFCWHYLAALCILAA). Phosphoserine is present on residues serine 271 and serine 273.

This sequence belongs to the TMEM45 family.

The protein resides in the endosome membrane. It is found in the lysosome membrane. Its subcellular location is the golgi apparatus. It localises to the trans-Golgi network membrane. Functionally, plays a role in innate immunity. This is Transmembrane protein 45B (TMEM45B) from Bos taurus (Bovine).